Consider the following 940-residue polypeptide: Isoleucine--tRNA ligase (940 aa).

A 'HIGH' region motif is present at residues 58–68; sequence PYANGSIHIGH. Residue glutamate 564 coordinates L-isoleucyl-5'-AMP. The 'KMSKS' region motif lies at 605 to 609; it reads KMSKS. Lysine 608 lines the ATP pocket. Residues cysteine 903, cysteine 906, cysteine 923, and cysteine 926 each contribute to the Zn(2+) site.

The protein belongs to the class-I aminoacyl-tRNA synthetase family. IleS type 1 subfamily. As to quaternary structure, monomer. The cofactor is Zn(2+).

It is found in the cytoplasm. The catalysed reaction is tRNA(Ile) + L-isoleucine + ATP = L-isoleucyl-tRNA(Ile) + AMP + diphosphate. In terms of biological role, catalyzes the attachment of isoleucine to tRNA(Ile). As IleRS can inadvertently accommodate and process structurally similar amino acids such as valine, to avoid such errors it has two additional distinct tRNA(Ile)-dependent editing activities. One activity is designated as 'pretransfer' editing and involves the hydrolysis of activated Val-AMP. The other activity is designated 'posttransfer' editing and involves deacylation of mischarged Val-tRNA(Ile). The chain is Isoleucine--tRNA ligase from Shewanella amazonensis (strain ATCC BAA-1098 / SB2B).